A 404-amino-acid polypeptide reads, in one-letter code: Serine/threonine transporter SstT (404 aa).

8 helical membrane-spanning segments follow: residues Ile17–Phe37, Ile39–Leu59, Met75–Leu95, Ala138–Leu158, Ile179–Ile199, Phe212–Ile232, Ile287–Leu307, and Phe313–Ala333.

It belongs to the dicarboxylate/amino acid:cation symporter (DAACS) (TC 2.A.23) family.

It localises to the cell membrane. It catalyses the reaction L-serine(in) + Na(+)(in) = L-serine(out) + Na(+)(out). The enzyme catalyses L-threonine(in) + Na(+)(in) = L-threonine(out) + Na(+)(out). Functionally, involved in the import of serine and threonine into the cell, with the concomitant import of sodium (symport system). This chain is Serine/threonine transporter SstT, found in Streptococcus pyogenes serotype M2 (strain MGAS10270).